We begin with the raw amino-acid sequence, 232 residues long: 5'-methylthioadenosine/S-adenosylhomocysteine nucleosidase (232 aa).

The active-site Proton acceptor is the E12. Residues G78, I152, and 173–174 (ME) contribute to the substrate site. D197 acts as the Proton donor in catalysis.

The protein belongs to the PNP/UDP phosphorylase family. MtnN subfamily. Homodimer.

It carries out the reaction S-adenosyl-L-homocysteine + H2O = S-(5-deoxy-D-ribos-5-yl)-L-homocysteine + adenine. The catalysed reaction is S-methyl-5'-thioadenosine + H2O = 5-(methylsulfanyl)-D-ribose + adenine. It catalyses the reaction 5'-deoxyadenosine + H2O = 5-deoxy-D-ribose + adenine. It participates in amino-acid biosynthesis; L-methionine biosynthesis via salvage pathway; S-methyl-5-thio-alpha-D-ribose 1-phosphate from S-methyl-5'-thioadenosine (hydrolase route): step 1/2. Catalyzes the irreversible cleavage of the glycosidic bond in both 5'-methylthioadenosine (MTA) and S-adenosylhomocysteine (SAH/AdoHcy) to adenine and the corresponding thioribose, 5'-methylthioribose and S-ribosylhomocysteine, respectively. Also cleaves 5'-deoxyadenosine, a toxic by-product of radical S-adenosylmethionine (SAM) enzymes, into 5-deoxyribose and adenine. Thus, is required for in vivo function of the radical SAM enzymes biotin synthase and lipoic acid synthase, that are inhibited by 5'-deoxyadenosine accumulation. The polypeptide is 5'-methylthioadenosine/S-adenosylhomocysteine nucleosidase (Klebsiella pneumoniae subsp. pneumoniae (strain ATCC 700721 / MGH 78578)).